The primary structure comprises 147 residues: MKVILLKDVPSLGKADSVVNVANGYAKNFLFKNKLAEPYTERGQKRLDLKVIKRNEQHDLLALEAKNLAKQLEGVVLEYDIRTNEEDKAFGTIGFKQIVDDLSKKHIFVTKDMLDSKMKLDIGEHRVKINIFEGIHATILVKVSKAQ.

Belongs to the bacterial ribosomal protein bL9 family.

Binds to the 23S rRNA. This is Large ribosomal subunit protein bL9 from Mycoplasmoides gallisepticum (strain R(low / passage 15 / clone 2)) (Mycoplasma gallisepticum).